Reading from the N-terminus, the 199-residue chain is Oleosin 21.2 kDa (199 aa).

Over residues 1–14 (MADTHRVDRTDRHF) the composition is skewed to basic and acidic residues. Residues 1 to 31 (MADTHRVDRTDRHFQFQSPYEGGRGQGQYEG) form a disordered region. Ala-2 bears the N-acetylalanine mark. The interval 2–56 (ADTHRVDRTDRHFQFQSPYEGGRGQGQYEGDRGYGGGGYKSMMPESGPSSTQVLS) is polar. Over residues 22–31 (GGRGQGQYEG) the composition is skewed to gly residues. A run of 3 helical transmembrane segments spans residues 51–71 (STQVLSLLIGVPVVGSLLALA), 72–92 (GLLLAGSVIGLMVALPLFLLF), and 96–116 (IVPAALTIGLAMTGFLASGMF). A hydrophobic region spans residues 57 to 128 (LLIGVPVVGS…TGLSSISWVM (72 aa)). Residues 159-199 (KGKEMGQHVQNKAQDVKQYDISKPHDTTTKGHETQGRTTAA) form a disordered region. Over residues 172–193 (QDVKQYDISKPHDTTTKGHETQ) the composition is skewed to basic and acidic residues.

This sequence belongs to the oleosin family.

It is found in the lipid droplet. The protein localises to the membrane. Functionally, may have a structural role to stabilize the lipid body during desiccation of the seed by preventing coalescence of the oil. Probably interacts with both lipid and phospholipid moieties of lipid bodies. May also provide recognition signals for specific lipase anchorage in lipolysis during seedling growth. The polypeptide is Oleosin 21.2 kDa (Arabidopsis thaliana (Mouse-ear cress)).